A 340-amino-acid polypeptide reads, in one-letter code: DNA-directed RNA polymerase subunit alpha (340 aa).

The interval 1–236 (MLSLSKNWNT…EQLQLFIAFE (236 aa)) is alpha N-terminal domain (alpha-NTD). An alpha C-terminal domain (alpha-CTD) region spans residues 251 to 340 (FSPYLLKRVD…LSKRYEDSYN (90 aa)).

Belongs to the RNA polymerase alpha chain family. As to quaternary structure, homodimer. The RNAP catalytic core consists of 2 alpha, 1 beta, 1 beta' and 1 omega subunit. When a sigma factor is associated with the core the holoenzyme is formed, which can initiate transcription.

It catalyses the reaction RNA(n) + a ribonucleoside 5'-triphosphate = RNA(n+1) + diphosphate. In terms of biological role, DNA-dependent RNA polymerase catalyzes the transcription of DNA into RNA using the four ribonucleoside triphosphates as substrates. The protein is DNA-directed RNA polymerase subunit alpha of Rickettsia typhi (strain ATCC VR-144 / Wilmington).